The sequence spans 420 residues: Pre-mRNA-splicing factor RBM22 (420 aa).

At Ala2 the chain carries N-acetylalanine. A phosphoserine mark is found at Ser4 and Ser102. Glycyl lysine isopeptide (Lys-Gly) (interchain with G-Cter in SUMO2) cross-links involve residues Lys139 and Lys149. The C3H1-type zinc finger occupies 159 to 186 (RNRPHICSFWVKGECKRGEECPYRHEKP). At Lys212 the chain carries N6-acetyllysine. The RRM domain maps to 232-305 (TTLYVGGLGD…RRLNVKWGRS (74 aa)). Lys290 is covalently cross-linked (Glycyl lysine isopeptide (Lys-Gly) (interchain with G-Cter in SUMO2)). Disordered regions lie at residues 303-343 (GRSQ…AAEE) and 372-420 (APPP…HSSP). The span at 309–318 (RGKEKEKDGT) shows a compositional bias: basic and acidic residues.

The protein belongs to the SLT11 family. Component of the pre-catalytic and catalytic spliceosome complexes. Component of the postcatalytic spliceosome P complex. Interacts with PDCD6; the interaction induces translocation of PDCD6 in the cytoplasm. Interacts with PPIL1.

The protein resides in the nucleus. It is found in the cytoplasm. Its function is as follows. Required for pre-mRNA splicing as component of the activated spliceosome. Involved in the first step of pre-mRNA splicing. Binds directly to the internal stem-loop (ISL) domain of the U6 snRNA and to the pre-mRNA intron near the 5' splice site during the activation and catalytic phases of the spliceosome cycle. Involved in both translocations of the nuclear SLU7 to the cytoplasm and the cytosolic calcium-binding protein PDCD6 to the nucleus upon cellular stress responses. This chain is Pre-mRNA-splicing factor RBM22 (RBM22), found in Bos taurus (Bovine).